A 287-amino-acid polypeptide reads, in one-letter code: ATP synthase gamma chain (287 aa).

It belongs to the ATPase gamma chain family. In terms of assembly, F-type ATPases have 2 components, CF(1) - the catalytic core - and CF(0) - the membrane proton channel. CF(1) has five subunits: alpha(3), beta(3), gamma(1), delta(1), epsilon(1). CF(0) has three main subunits: a, b and c.

The protein localises to the cell inner membrane. Produces ATP from ADP in the presence of a proton gradient across the membrane. The gamma chain is believed to be important in regulating ATPase activity and the flow of protons through the CF(0) complex. The chain is ATP synthase gamma chain from Cronobacter sakazakii (strain ATCC BAA-894) (Enterobacter sakazakii).